The following is a 509-amino-acid chain: Taxoid 14-beta-hydroxylase (509 aa).

Helical transmembrane passes span 20–40 (AILFIVLSAVAGIVLPLLLFL), 186–206 (SVVALVGDLVFDISACLFFNI), and 218–238 (LLEIIAVGVLAVPVDLPGFAY). A heme-binding site is contributed by Cys-443.

It belongs to the cytochrome P450 family.

It localises to the microsome membrane. It catalyses the reaction 10beta-hydroxytaxa-4(20),11-dien-5alpha-yl acetate + NADPH + O2 + H(+) = 10beta,14beta-dihydroxytaxa-4(20),11-dien-5alpha-yl acetate + NADP(+) + H2O. The protein operates within alkaloid biosynthesis; taxol biosynthesis. Its function is as follows. Catalyzes the conversion of 5-alpha-acetoxy-10beta-ol to 5-alpha-acetoxy-10beta,14beta-dihydroxy taxadiene. Also acts on taxa-4(20),11-dien-5-alpha-yl acetate. This is Taxoid 14-beta-hydroxylase from Taxus cuspidata (Japanese yew).